Reading from the N-terminus, the 216-residue chain is Cell division protein SepF (216 aa).

The segment at glutamate 22–alanine 126 is disordered. Composition is skewed to basic and acidic residues over residues aspartate 28 to valine 50, serine 62 to valine 80, and alanine 106 to valine 118.

This sequence belongs to the SepF family. As to quaternary structure, homodimer. Interacts with FtsZ.

It localises to the cytoplasm. In terms of biological role, cell division protein that is part of the divisome complex and is recruited early to the Z-ring. Probably stimulates Z-ring formation, perhaps through the cross-linking of FtsZ protofilaments. Its function overlaps with FtsA. The chain is Cell division protein SepF from Rhodococcus erythropolis (strain PR4 / NBRC 100887).